Consider the following 99-residue polypeptide: Integration host factor subunit alpha (99 aa).

Residues 49–73 (FGNFDLRDKNQRPGRNPKTGEDIPI) form a disordered region.

The protein belongs to the bacterial histone-like protein family. As to quaternary structure, heterodimer of an alpha and a beta chain.

Its function is as follows. This protein is one of the two subunits of integration host factor, a specific DNA-binding protein that functions in genetic recombination as well as in transcriptional and translational control. This is Integration host factor subunit alpha from Shigella boydii serotype 18 (strain CDC 3083-94 / BS512).